The chain runs to 232 residues: UPF0177 protein in abiGi 5'region (232 aa).

6 helical membrane passes run 12–32, 47–67, 86–106, 124–144, 165–185, and 206–226; these read YLSL…ILAY, VVAT…GILI, LLFL…SYTY, SIQI…APIF, IVSC…LIVY, and ILVH…LQVI.

Belongs to the UPF0177 family.

The protein resides in the cell membrane. Its function is as follows. The function of this protein is currently unknown, but it has been shown that it is not necessary for phage resistance. The sequence is that of UPF0177 protein in abiGi 5'region from Lactococcus lactis subsp. cremoris (Streptococcus cremoris).